The chain runs to 128 residues: Aspartate 1-decarboxylase (128 aa).

S25 acts as the Schiff-base intermediate with substrate; via pyruvic acid in catalysis. Position 25 is a pyruvic acid (Ser) (S25). Position 57 (T57) interacts with substrate. Catalysis depends on Y58, which acts as the Proton donor. G73–A75 provides a ligand contact to substrate.

This sequence belongs to the PanD family. In terms of assembly, heterooctamer of four alpha and four beta subunits. Pyruvate serves as cofactor. Is synthesized initially as an inactive proenzyme, which is activated by self-cleavage at a specific serine bond to produce a beta-subunit with a hydroxyl group at its C-terminus and an alpha-subunit with a pyruvoyl group at its N-terminus.

Its subcellular location is the cytoplasm. The catalysed reaction is L-aspartate + H(+) = beta-alanine + CO2. Its pathway is cofactor biosynthesis; (R)-pantothenate biosynthesis; beta-alanine from L-aspartate: step 1/1. Catalyzes the pyruvoyl-dependent decarboxylation of aspartate to produce beta-alanine. This Burkholderia thailandensis (strain ATCC 700388 / DSM 13276 / CCUG 48851 / CIP 106301 / E264) protein is Aspartate 1-decarboxylase.